We begin with the raw amino-acid sequence, 515 residues long: Maturase K (515 aa).

The protein belongs to the intron maturase 2 family. MatK subfamily.

It is found in the plastid. Its subcellular location is the chloroplast. Functionally, usually encoded in the trnK tRNA gene intron. Probably assists in splicing its own and other chloroplast group II introns. This is Maturase K from Pinus sibirica (Siberian pine).